The following is a 913-amino-acid chain: Eukaryotic translation initiation factor 3 subunit C (913 aa).

The segment at 1-31 (MSRFFANGSDSESESSEEEVQASNFNKANNF) is disordered. Over residues 11–20 (SESESSEEEV) the composition is skewed to acidic residues. Over residues 21–31 (QASNFNKANNF) the composition is skewed to polar residues. Ser34, Ser165, Ser177, and Ser186 each carry phosphoserine. Disordered regions lie at residues 157-195 (FREA…AGTG) and 208-285 (PTKV…EDGE). Acidic residues predominate over residues 162–171 (DQESDVDEGE). Residues 172-184 (GEAHDSDAERAGA) are compositionally biased toward basic and acidic residues. Residues 214–239 (DEDDSDDSIDWDSDTESETESSEDEN) are compositionally biased toward acidic residues. The segment covering 244-263 (MRERFLKRTTEKEDKDDDKR) has biased composition (basic and acidic residues). Positions 264-276 (KDKRKEQKHKVRK) are enriched in basic residues. Residues 645 to 821 (FHMHINLELL…ETVVMHRSEP (177 aa)) form the PCI domain. A disordered region spans residues 856-913 (RGNMGNRDRGYNRNQNNQGGNWGGQRRDNRNQRNRNQRGHHKQQQQQQQQQVQTIEEE). The segment covering 887–898 (QRNRNQRGHHKQ) has biased composition (basic residues).

This sequence belongs to the eIF-3 subunit C family. In terms of assembly, component of the eukaryotic translation initiation factor 3 (eIF-3) complex. The eIF-3 complex interacts with pix.

Its subcellular location is the cytoplasm. Its function is as follows. Component of the eukaryotic translation initiation factor 3 (eIF-3) complex, which is involved in protein synthesis of a specialized repertoire of mRNAs and, together with other initiation factors, stimulates binding of mRNA and methionyl-tRNAi to the 40S ribosome. The eIF-3 complex specifically targets and initiates translation of a subset of mRNAs involved in cell proliferation. The chain is Eukaryotic translation initiation factor 3 subunit C from Drosophila virilis (Fruit fly).